The chain runs to 245 residues: Transmembrane and ubiquitin-like domain-containing protein 1 (245 aa).

The tract at residues Ala2–Ser30 is required to release iHOPS from membranes. Residues Val11 to Thr31 form a helical membrane-spanning segment. The disordered stretch occupies residues Thr33–Glu100. Phosphoserine is present on residues Ser73, Ser97, and Ser126. In terms of domain architecture, Ubiquitin-like spans Leu102–Gly175. A run of 2 helical transmembrane segments spans residues Ile194–Ile214 and Phe219–Ala239.

In terms of assembly, interacts with EEF1A1, CAMLG, GRIA2 and GRIP1. Interacts with NPM1 and CDKN2A; TMUB1 can enhance interaction between NPM1 and CDKN2A and is proposed to bridge the proteins; proposed to be mediated by iHOPS. Interacts with TUBG1. Interacts with ERLIN2 and AMFR; TMUB1 promotes the interaction of ERLIN2 with AMFR. In terms of processing, isoform 1 (lHOPS) is processed by regulated intramembrane proteolysis (RIP) in the N-terminus to release iHOPS from membranes. Post-translationally, isoform 2 seems to undergo a selective cleavage in the C-terminal region to release an additional cytoplasmic form. In terms of tissue distribution, expressed in adult brain; at protein level. Isoform 1 (lHOPS) is highly expressed in small intestine, stomach and epididymis. Isoform 2 (sHOPS) and iHOPS are abundantly expressed in brain, liver and adrenal gland.

It is found in the membrane. The protein resides in the postsynaptic cell membrane. The protein localises to the recycling endosome. Its subcellular location is the cytoplasm. It localises to the nucleus. It is found in the nucleolus. The protein resides in the cytoskeleton. The protein localises to the microtubule organizing center. Its subcellular location is the centrosome. Involved in sterol-regulated ubiquitination and degradation of HMG-CoA reductase HMGCR. Involved in positive regulation of AMPA-selective glutamate receptor GRIA2 recycling to the cell surface. Acts as a negative regulator of hepatocyte growth during regeneration. Functionally, may contribute to the regulation of translation during cell-cycle progression. May contribute to the regulation of cell proliferation. May be involved in centrosome assembly. Modulates stabilization and nucleolar localization of tumor suppressor CDKN2A and enhances association between CDKN2A and NPM1. This is Transmembrane and ubiquitin-like domain-containing protein 1 (Tmub1) from Mus musculus (Mouse).